Reading from the N-terminus, the 139-residue chain is Translation initiation factor 2 subunit beta (139 aa).

The protein belongs to the eIF-2-beta/eIF-5 family. In terms of assembly, heterotrimer composed of an alpha, a beta and a gamma chain.

Its function is as follows. eIF-2 functions in the early steps of protein synthesis by forming a ternary complex with GTP and initiator tRNA. The protein is Translation initiation factor 2 subunit beta of Saccharolobus islandicus (strain Y.N.15.51 / Yellowstone #2) (Sulfolobus islandicus).